The chain runs to 435 residues: GPI-anchor transamidase component PIGU (435 aa).

The Cytoplasmic portion of the chain corresponds to 1-3 (MAA). The chain crosses the membrane as a helical span at residues 4-22 (PLALVLVVAVTVRAALFRS). Over 23-78 (SLAEFISERVEVVSPLSSWKRVVEGLSLLDLGVSPYSGAVFHETPLIIYLFHFLID) the chain is Lumenal. Residues 79–99 (YAELVFMITDALTAIALYFAI) traverse the membrane as a helical segment. At 100–136 (QDFNKVVFKKQKLLLELDQYAPDVAELIRTPMEMRYI) the chain is on the cytoplasmic side. The next 4 membrane-spanning stretches (helical) occupy residues 137 to 158 (PLKVALFYLLNPYTILSCVAKS), 159 to 178 (TCAINNTLIAFFILTTIKGS), 179 to 194 (VFLSAIFLALATYQTL), and 195 to 205 (YPVTLFAPGLL). Residues 206-222 (YLLQRQYIPVKVKSKAF) lie on the Cytoplasmic side of the membrane. An a cardiolipin-binding site is contributed by K216. The chain crosses the membrane as a helical span at residues 223 to 244 (WIFSWEYAMMYIGSLVVIVCLS). The Lumenal portion of the chain corresponds to 245–286 (FFLLSSWDFIPAVYGFILSVPDLTPNIGLFWYFFAEMFEHFS). Residues 287–306 (LFFVCVFQINVFFYTVPLAI) traverse the membrane as a helical segment. Residues 307–311 (KLKEH) are Cytoplasmic-facing. K309 is an a cardiolipin binding site. 2 helical membrane-spanning segments follow: residues 312 to 331 (PIFFMFIQIAIISIFKSYPT) and 332 to 345 (VGDVALYMAFFPVW). The Cytoplasmic segment spans residues 346-354 (NHLYRFLRN). Residues 355-372 (VFVLTCIIVVCSLLFPVL) traverse the membrane as a helical segment. Topologically, residues 373 to 384 (WHLWIYAGSANS) are lumenal. A 2-acyl-6-[6-phosphoethanolamine-alpha-D-mannosyl-(1-&gt;2)-6-phosphoethanolamine-alpha-D-mannosyl-(1-&gt;6)-2-phosphoethanolamine-alpha-D-mannosyl-(1-&gt;4)-alpha-D-glucosaminyl]-1-(1-radyl,2-acyl-sn-glycero-3-phospho)-1D-myo-inositol is bound by residues N383 and N385. The chain crosses the membrane as a helical span at residues 385–406 (NFFYAITLTFNVGQILLISDYF). At 407–435 (YAFLRREYYLTHGLYLTAKDGTEAMLVLK) the chain is on the cytoplasmic side.

The protein belongs to the PIGU family. Heteropentamer. Part of the GPI-anchor transamidase complex, consisting of PIGK, PIGT, PIGS, PIGU and GAA1.

It is found in the endoplasmic reticulum membrane. Its pathway is glycolipid biosynthesis; glycosylphosphatidylinositol-anchor biosynthesis. In terms of biological role, component of the glycosylphosphatidylinositol-anchor (GPI-anchor) transamidase (GPI-T) complex that catalyzes the formation of the linkage between a proprotein and a GPI-anchor and participates in GPI anchored protein biosynthesis. Binds the lipid portion of GPI-anchor. May act as an organizer in the transmembrane layer to recruit other subunits, and thus is essential for assembly of the complex. In Cricetulus griseus (Chinese hamster), this protein is GPI-anchor transamidase component PIGU.